The chain runs to 203 residues: N-(5'-phosphoribosyl)anthranilate isomerase (203 aa).

It belongs to the TrpF family.

It carries out the reaction N-(5-phospho-beta-D-ribosyl)anthranilate = 1-(2-carboxyphenylamino)-1-deoxy-D-ribulose 5-phosphate. It functions in the pathway amino-acid biosynthesis; L-tryptophan biosynthesis; L-tryptophan from chorismate: step 3/5. This chain is N-(5'-phosphoribosyl)anthranilate isomerase, found in Caldanaerobacter subterraneus subsp. tengcongensis (strain DSM 15242 / JCM 11007 / NBRC 100824 / MB4) (Thermoanaerobacter tengcongensis).